Consider the following 184-residue polypeptide: Probable RNA 2'-phosphotransferase (184 aa).

The protein belongs to the KptA/TPT1 family.

In terms of biological role, removes the 2'-phosphate from RNA via an intermediate in which the phosphate is ADP-ribosylated by NAD followed by a presumed transesterification to release the RNA and generate ADP-ribose 1''-2''-cyclic phosphate (APPR&gt;P). May function as an ADP-ribosylase. This chain is Probable RNA 2'-phosphotransferase, found in Burkholderia pseudomallei (strain K96243).